The chain runs to 251 residues: uncharacterized protein (251 aa).

Positions 21–246 (KGSSPFAFYA…ITYEEFNKQL (226 aa)) constitute an AMMECR1 domain.

This is an uncharacterized protein from Saccharomyces cerevisiae (strain ATCC 204508 / S288c) (Baker's yeast).